Consider the following 353-residue polypeptide: Serine proteinase inhibitor 1 (353 aa).

The protein belongs to the serpin family. Poxviruses subfamily.

It localises to the host cytoplasm. Functionally, plays a role in mediating viral host range. May act to inhibit a caspase independent form of apoptosis to allow efficient virus replication in infected cells. This Vaccinia virus (strain Western Reserve) (VACV) protein is Serine proteinase inhibitor 1 (OPG208).